Consider the following 421-residue polypeptide: MHKLLKLAAMGTAACALLAGMAPVANAQEKQNVEVLHWWTSGGEASALEVLKKDLESKGISWTDMPVAGGGGTEAMTVLRARVTAGNAPTAVQMLGFDIRDWAEQGALGNLDTVASKEGWEKVIPAPLQEFAKYDGHWIAAPVNIHSTNWMWINKAALDKAGGKEPTNWDELIALLDNFKAQGITPIAHGGQPWQDATIFDAVVLSFGPDFYKKAFIDLDPEALGSDTMKQAFDRMSKLRTYVDDNFSGRDWNLASAMVIEGKAGVQFMGDWAKGEFLKAGKKPGEDFVCMRYPGTQGAVTFNSDMFAMFKVSEDKVPAQLEMASAIESPAFQSAFNVVKGSAPARTDVPDTAFDACGKKAIADVKEANSKGTLLGSMAHGYANPAAVKNAIYDVVTRQFNGQLSSEDAVKELVVAVEAAK.

The N-terminal stretch at 1–27 is a signal peptide; sequence MHKLLKLAAMGTAACALLAGMAPVANA.

It belongs to the bacterial solute-binding protein 1 family.

It localises to the periplasm. Its function is as follows. Part of a binding-protein-dependent transport system for a sugar. This is Probable sugar-binding periplasmic protein from Brucella melitensis biotype 1 (strain ATCC 23456 / CCUG 17765 / NCTC 10094 / 16M).